The following is a 972-amino-acid chain: C-1-tetrahydrofolate synthase, mitochondrial (972 aa).

The transit peptide at 1-55 (MNVMVSFNQLRNYFLESNSLRPSKWLFQSYGTSSSANILNGKLLARKLQRSVAEE) directs the protein to the mitochondrion. The segment at 56-340 (VQALKAKDRN…DLNPLELKKP (285 aa)) is methylenetetrahydrofolate dehydrogenase and cyclohydrolase. Substrate is bound by residues 84-88 (YVRMK) and 131-133 (VQL). NADP(+) is bound by residues 202–204 (GRS) and Ser-227. Position 299–303 (299–303 (PGGVG)) interacts with substrate. The tract at residues 341–972 (VPSDIEIANS…CENGEIVGLS (632 aa)) is formyltetrahydrofolate synthetase. 405–412 (TPFGEGKS) is a binding site for ATP.

This sequence in the N-terminal section; belongs to the tetrahydrofolate dehydrogenase/cyclohydrolase family. In the C-terminal section; belongs to the formate--tetrahydrofolate ligase family. In terms of assembly, homodimer.

It is found in the mitochondrion. The enzyme catalyses (6R)-5,10-methylene-5,6,7,8-tetrahydrofolate + NADP(+) = (6R)-5,10-methenyltetrahydrofolate + NADPH. The catalysed reaction is (6R)-5,10-methenyltetrahydrofolate + H2O = (6R)-10-formyltetrahydrofolate + H(+). It carries out the reaction (6S)-5,6,7,8-tetrahydrofolate + formate + ATP = (6R)-10-formyltetrahydrofolate + ADP + phosphate. The protein operates within one-carbon metabolism; tetrahydrofolate interconversion. Functionally, mitochondrial isozyme of C-1-tetrahydrofolate synthase. The trifunctional enzyme catalyzes the interconversion of the one-carbon derivatives of tetrahydrofolate (THF) between different oxidation states by the enzymatic activities 10-formyltetrahydrofolate synthetase, 5,lO-methenyltetrahydrofolate cyclohydrolase, and 5,lO-methylenetetrahydrofolate dehydrogenase. This is C-1-tetrahydrofolate synthase, mitochondrial (ade9) from Schizosaccharomyces pombe (strain 972 / ATCC 24843) (Fission yeast).